The primary structure comprises 214 residues: Large ribosomal subunit protein uL3 (214 aa).

Positions 131-153 (KSQRASHGNSRSHNVPGSIGMAQ) are disordered. Residues 132-145 (SQRASHGNSRSHNV) are compositionally biased toward polar residues. Glutamine 153 bears the N5-methylglutamine mark.

This sequence belongs to the universal ribosomal protein uL3 family. Part of the 50S ribosomal subunit. Forms a cluster with proteins L14 and L19. In terms of processing, methylated by PrmB.

In terms of biological role, one of the primary rRNA binding proteins, it binds directly near the 3'-end of the 23S rRNA, where it nucleates assembly of the 50S subunit. The chain is Large ribosomal subunit protein uL3 from Thiobacillus denitrificans (strain ATCC 25259 / T1).